The chain runs to 337 residues: Protein RecA (337 aa).

66-73 (GPESSGKT) provides a ligand contact to ATP.

It belongs to the RecA family.

Its subcellular location is the cytoplasm. Functionally, can catalyze the hydrolysis of ATP in the presence of single-stranded DNA, the ATP-dependent uptake of single-stranded DNA by duplex DNA, and the ATP-dependent hybridization of homologous single-stranded DNAs. It interacts with LexA causing its activation and leading to its autocatalytic cleavage. This chain is Protein RecA, found in Mesomycoplasma hyopneumoniae (strain J / ATCC 25934 / NCTC 10110) (Mycoplasma hyopneumoniae).